The chain runs to 177 residues: Large ribosomal subunit protein uL6 (177 aa).

It belongs to the universal ribosomal protein uL6 family. Part of the 50S ribosomal subunit.

Its function is as follows. This protein binds to the 23S rRNA, and is important in its secondary structure. It is located near the subunit interface in the base of the L7/L12 stalk, and near the tRNA binding site of the peptidyltransferase center. This is Large ribosomal subunit protein uL6 from Tolumonas auensis (strain DSM 9187 / NBRC 110442 / TA 4).